A 1183-amino-acid chain; its full sequence is DNA-directed RNA polymerase subunit beta (1183 aa).

Over residues 1149–1162 (DNEIEMADVDDEDA) the composition is skewed to acidic residues. Positions 1149–1183 (DNEIEMADVDDEDATERKVDLQQKDVPETQKETTD) are disordered. Residues 1163 to 1183 (TERKVDLQQKDVPETQKETTD) show a composition bias toward basic and acidic residues.

The protein belongs to the RNA polymerase beta chain family. In terms of assembly, the RNAP catalytic core consists of 2 alpha, 1 beta, 1 beta' and 1 omega subunit. When a sigma factor is associated with the core the holoenzyme is formed, which can initiate transcription.

The catalysed reaction is RNA(n) + a ribonucleoside 5'-triphosphate = RNA(n+1) + diphosphate. Functionally, DNA-dependent RNA polymerase catalyzes the transcription of DNA into RNA using the four ribonucleoside triphosphates as substrates. The polypeptide is DNA-directed RNA polymerase subunit beta (Staphylococcus haemolyticus (strain JCSC1435)).